Here is a 312-residue protein sequence, read N- to C-terminus: Probable cell division protein WhiA (312 aa).

Positions 274 to 308 (SLKELGTLVPGGPISKSGVNHRLRKLNAYADELRQ) form a DNA-binding region, H-T-H motif.

This sequence belongs to the WhiA family.

In terms of biological role, involved in cell division and chromosome segregation. The chain is Probable cell division protein WhiA from Limosilactobacillus fermentum (strain NBRC 3956 / LMG 18251) (Lactobacillus fermentum).